Reading from the N-terminus, the 282-residue chain is Large ribosomal subunit protein uL2 (282 aa).

The interval 223-282 is disordered; that stretch reads TVRGSVMNPNDHPHGGGEGRAPIGRKSPVTPWGKKALGVKTRNTKKTSEKLIVRKRSNKK.

This sequence belongs to the universal ribosomal protein uL2 family. As to quaternary structure, part of the 50S ribosomal subunit. Forms a bridge to the 30S subunit in the 70S ribosome.

In terms of biological role, one of the primary rRNA binding proteins. Required for association of the 30S and 50S subunits to form the 70S ribosome, for tRNA binding and peptide bond formation. It has been suggested to have peptidyltransferase activity; this is somewhat controversial. Makes several contacts with the 16S rRNA in the 70S ribosome. This chain is Large ribosomal subunit protein uL2, found in Mycoplasma mycoides subsp. mycoides SC (strain CCUG 32753 / NCTC 10114 / PG1).